The chain runs to 501 residues: Cytochrome P450 71D6 (501 aa).

C442 provides a ligand contact to heme.

It belongs to the cytochrome P450 family. The cofactor is heme.

This is Cytochrome P450 71D6 (CYP71D6) from Solanum chacoense (Chaco potato).